The following is a 194-amino-acid chain: Protein GrpE (194 aa).

The disordered stretch occupies residues 1–40 (MSRKHHKEQEEIQEQETISAGAAETPAEETAAIPAATEAD). Low complexity predominate over residues 20–38 (AGAAETPAEETAAIPAATE).

This sequence belongs to the GrpE family. As to quaternary structure, homodimer.

It is found in the cytoplasm. Functionally, participates actively in the response to hyperosmotic and heat shock by preventing the aggregation of stress-denatured proteins, in association with DnaK and GrpE. It is the nucleotide exchange factor for DnaK and may function as a thermosensor. Unfolded proteins bind initially to DnaJ; upon interaction with the DnaJ-bound protein, DnaK hydrolyzes its bound ATP, resulting in the formation of a stable complex. GrpE releases ADP from DnaK; ATP binding to DnaK triggers the release of the substrate protein, thus completing the reaction cycle. Several rounds of ATP-dependent interactions between DnaJ, DnaK and GrpE are required for fully efficient folding. In Chlorobaculum tepidum (strain ATCC 49652 / DSM 12025 / NBRC 103806 / TLS) (Chlorobium tepidum), this protein is Protein GrpE.